A 177-amino-acid polypeptide reads, in one-letter code: Thymidine kinase (177 aa).

11–18 (GPMFSGKS) provides a ligand contact to ATP. Catalysis depends on Glu83, which acts as the Proton acceptor. Phe113 provides a ligand contact to substrate. The Zn(2+) site is built by Cys138 and Cys141. 157-161 (IEIIG) is a binding site for substrate. Zn(2+)-binding residues include Cys170 and Cys173.

Belongs to the thymidine kinase family. In terms of assembly, homotetramer. Two molecules of substrate bind to each enzyme tetramer.

The catalysed reaction is thymidine + ATP = dTMP + ADP + H(+). Phosphorylates thymidine and thymidine analogs, such as azidothymidine (AZT). Part of the salvage pathway for pyrimidine deoxyribonucleotide synthesis. The polypeptide is Thymidine kinase (OPG101) (Vaccinia virus (strain Tian Tan) (VACV)).